We begin with the raw amino-acid sequence, 695 residues long: Elongation factor G (695 aa).

A tr-type G domain is found at Lys8–Ile282. GTP is bound by residues Ala17–Thr24, Asp81–His85, and Asn135–Asp138. Residues Pro285–Asp304 are disordered.

Belongs to the TRAFAC class translation factor GTPase superfamily. Classic translation factor GTPase family. EF-G/EF-2 subfamily.

Its subcellular location is the cytoplasm. Functionally, catalyzes the GTP-dependent ribosomal translocation step during translation elongation. During this step, the ribosome changes from the pre-translocational (PRE) to the post-translocational (POST) state as the newly formed A-site-bound peptidyl-tRNA and P-site-bound deacylated tRNA move to the P and E sites, respectively. Catalyzes the coordinated movement of the two tRNA molecules, the mRNA and conformational changes in the ribosome. The protein is Elongation factor G of Finegoldia magna (strain ATCC 29328 / DSM 20472 / WAL 2508) (Peptostreptococcus magnus).